We begin with the raw amino-acid sequence, 212 residues long: Small ribosomal subunit protein uS5 (212 aa).

The region spanning 48 to 111 (LEDEVLDINM…DIAKLNIIDV (64 aa)) is the S5 DRBM domain.

This sequence belongs to the universal ribosomal protein uS5 family. Part of the 30S ribosomal subunit. Contacts protein S4.

In terms of biological role, with S4 and S12 plays an important role in translational accuracy. The sequence is that of Small ribosomal subunit protein uS5 from Haloarcula marismortui (strain ATCC 43049 / DSM 3752 / JCM 8966 / VKM B-1809) (Halobacterium marismortui).